The sequence spans 149 residues: DnaJ homolog subfamily C member 24 (149 aa).

One can recognise a J domain in the interval Asp-11–Arg-82. The 56-residue stretch at Val-93–Tyr-148 folds into the DPH-type MB domain. Residues Cys-115, Cys-117, Cys-136, and Cys-139 each contribute to the Zn(2+) site.

It belongs to the DPH4 family. Monomer and homooligomer. Iron binding promotes oligomerization.

The protein resides in the cytoplasm. It localises to the cytoskeleton. Its pathway is protein modification; peptidyl-diphthamide biosynthesis. Its function is as follows. Stimulates the ATPase activity of several Hsp70-type chaperones. This ability is enhanced by iron-binding. The iron-bound form is redox-active and can function as electron carrier. Plays a role in the diphthamide biosynthesis, a post-translational modification of histidine which occurs in translation elongation factor 2 (EEF2) which can be ADP-ribosylated by diphtheria toxin and by Pseudomonas exotoxin A (Eta). This chain is DnaJ homolog subfamily C member 24, found in Homo sapiens (Human).